Consider the following 477-residue polypeptide: Bifunctional protein HldE (477 aa).

Positions 1 to 318 are ribokinase; that stretch reads MKVTLPEFER…ENAVRGRADT (318 aa). Lys179 is subject to N6-acetyllysine. 195–198 is a binding site for ATP; sequence NLSE. Asp264 is an active-site residue. Residues 344–477 form a cytidylyltransferase region; it reads MTNGVFDILH…IKKIQLDKKG (134 aa).

The protein in the N-terminal section; belongs to the carbohydrate kinase PfkB family. It in the C-terminal section; belongs to the cytidylyltransferase family. In terms of assembly, homodimer.

It carries out the reaction D-glycero-beta-D-manno-heptose 7-phosphate + ATP = D-glycero-beta-D-manno-heptose 1,7-bisphosphate + ADP + H(+). The catalysed reaction is D-glycero-beta-D-manno-heptose 1-phosphate + ATP + H(+) = ADP-D-glycero-beta-D-manno-heptose + diphosphate. It participates in nucleotide-sugar biosynthesis; ADP-L-glycero-beta-D-manno-heptose biosynthesis; ADP-L-glycero-beta-D-manno-heptose from D-glycero-beta-D-manno-heptose 7-phosphate: step 1/4. It functions in the pathway nucleotide-sugar biosynthesis; ADP-L-glycero-beta-D-manno-heptose biosynthesis; ADP-L-glycero-beta-D-manno-heptose from D-glycero-beta-D-manno-heptose 7-phosphate: step 3/4. Functionally, catalyzes the phosphorylation of D-glycero-D-manno-heptose 7-phosphate at the C-1 position to selectively form D-glycero-beta-D-manno-heptose-1,7-bisphosphate. In terms of biological role, catalyzes the ADP transfer from ATP to D-glycero-beta-D-manno-heptose 1-phosphate, yielding ADP-D-glycero-beta-D-manno-heptose. The polypeptide is Bifunctional protein HldE (Escherichia coli O81 (strain ED1a)).